Reading from the N-terminus, the 281-residue chain is 39kDa core protein OPG130 (281 aa).

Positions 1–22 are enriched in polar residues; the sequence is MDFFNKFSQGLAESSTPKSSIY. 2 disordered regions span residues 1–33 and 149–186; these read MDFFNKFSQGLAESSTPKSSIYYSEEKDPDTKK and NKDQKMTTPPSTQPSQTLPTTTCTQQSDGSISCTTPTV. Over residues 24 to 33 the composition is skewed to basic and acidic residues; sequence SEEKDPDTKK. Residues 155-175 show a composition bias toward low complexity; it reads TTPPSTQPSQTLPTTTCTQQS. The span at 176–186 shows a compositional bias: polar residues; sequence DGSISCTTPTV.

Belongs to the orthopoxvirus OPG130 family. In terms of assembly, interacts with OPG136 and its cleaved form. Post-translationally, its phosphorylation state is regulated by the OPG054 kinase and the OPG106 phosphatase.

It is found in the virion. It localises to the host endoplasmic reticulum-Golgi intermediate compartment membrane. In terms of biological role, component of the virion core. Participates in virion assembly. The sequence is that of 39kDa core protein OPG130 (OPG130) from Cynomys gunnisoni (Gunnison's prairie dog).